The following is a 92-amino-acid chain: Bombyxin A-1 (92 aa).

The signal sequence occupies residues 1-19 (MKILLAIALMLSTVMWVST). A Pyrrolidone carboxylic acid modification is found at Q20. Disulfide bonds link C29–C79, C41–C92, and C78–C83. Positions 50–70 (SGAQFASYGSAWLMPYSEGRG) are cleaved as a propeptide — c peptide like.

The protein belongs to the insulin family. As to quaternary structure, heterodimer of a B chain and an A chain linked by two disulfide bonds.

Its subcellular location is the secreted. Functionally, brain peptide responsible for activation of prothoracic glands to produce ecdysone in insects. The sequence is that of Bombyxin A-1 (BBXA1) from Bombyx mori (Silk moth).